Here is a 111-residue protein sequence, read N- to C-terminus: Ig kappa chain V-III region PC 7769 (111 aa).

Positions 1 to 23 are framework-1; the sequence is DIVLTQSPASLAVSLGQRATISC. Cys23 and Cys92 form a disulfide bridge. Residues 24–38 are complementarity-determining-1; that stretch reads KASQSVDYDGDSYMN. A framework-2 region spans residues 39 to 53; the sequence is WYQQKPGQPPKVLIF. Residues 54–60 are complementarity-determining-2; that stretch reads AASNLES. The segment at 61–92 is framework-3; the sequence is GIPARFSGSGSGTDFTLNIHPVEEEDAATYYC. Positions 93-101 are complementarity-determining-3; it reads QQSNEDPWT. The tract at residues 102 to 111 is framework-4; sequence FGSGTKLEIK.

This chain is Ig kappa chain V-III region PC 7769, found in Mus musculus (Mouse).